The following is a 1466-amino-acid chain: Helicase ARIP4 (1466 aa).

2 disordered regions span residues 1–137 (MSDE…ERRK) and 185–235 (DSSS…THVN). The span at 11–49 (PDLDPDVELEDEEEEEEEEEVAVEEHDRDDEEGLLDDTS) shows a compositional bias: acidic residues. The span at 72-82 (TSTTSSQSEPS) shows a compositional bias: low complexity. The span at 99–114 (KKRAQKPSHMRRNIRK) shows a compositional bias: basic residues. Residues Lys114 and Lys126 each participate in a glycyl lysine isopeptide (Lys-Gly) (interchain with G-Cter in SUMO2) cross-link. Residues 191–200 (EDEKSSRDEV) show a composition bias toward basic and acidic residues. Lys271 is covalently cross-linked (Glycyl lysine isopeptide (Lys-Gly) (interchain with G-Cter in SUMO2)). Residues 291 to 511 (RFKTSSGFGC…WCMVDFVRPD (221 aa)) enclose the Helicase ATP-binding domain. 304 to 311 (HSMGLGKT) contacts ATP. Positions 462–465 (DEGH) match the DEAH box motif. Residues 550–554 (LHSLL) carry the LXXLL motif 1 motif. The tract at residues 649-670 (SAGTSARCPPHGTKVKGEDSAL) is disordered. Residues Lys664, Lys681, Lys758, Lys900, Lys1013, and Lys1017 each participate in a glycyl lysine isopeptide (Lys-Gly) (interchain with G-Cter in SUMO2) cross-link. Positions 727 to 895 (HLIEESVKLG…RVVDDLNPML (169 aa)) constitute a Helicase C-terminal domain. Disordered regions lie at residues 1026–1045 (QSTP…GVSS) and 1120–1170 (ATGK…VSPD). A compositionally biased stretch (polar residues) spans 1135–1154 (SGSQGPSLASTSNGRHSASS). Phosphoserine is present on residues Ser1168 and Ser1171. 2 disordered regions span residues 1184-1212 (VAAA…MDNS) and 1259-1281 (TPSV…APVQ). Thr1259 carries the post-translational modification Phosphothreonine. An LXXLL motif 2 motif is present at residues 1328-1332 (LSNLL). The tract at residues 1444–1466 (AEVGFSSNDDEDKDDDVIEVTGK) is disordered. The span at 1451–1466 (NDDEDKDDDVIEVTGK) shows a compositional bias: acidic residues.

Belongs to the SNF2/RAD54 helicase family. Interacts with AR via its N-terminus. Interacts with DYRK1A. Binds DNA and mononucleosomes, but does not seem to form large multiprotein complexes. In terms of processing, sumoylated. In terms of tissue distribution, expressed at relatively low level, with highest expression in testis, liver and kidney. In brain, it is expressed in hippocampal and cerebellar neurons. In testis, it is present at high level in Sertoli cell nuclei. Also present in Leydig cell (at protein level).

The protein localises to the nucleus. The enzyme catalyses ATP + H2O = ADP + phosphate + H(+). Its activity is regulated as follows. Enzyme activity is enhanced by dsDNA (double-stranded DNA) and ssDNA (single-stranded DNA). Functionally, DNA helicase that modulates androgen receptor (AR)-dependent transactivation in a promoter-dependent manner. Not able to remodel mononucleosomes in vitro. Acts as an AR-coregulator in Sertoli cells. This chain is Helicase ARIP4 (Rad54l2), found in Mus musculus (Mouse).